The sequence spans 1279 residues: ATP-dependent helicase/nuclease subunit A (1279 aa).

The UvrD-like helicase ATP-binding domain maps to 4 to 499; sequence TKWTDEQRQA…VKLFKNFRSR (496 aa). 25–32 lines the ATP pocket; the sequence is AGAGAGKT. The region spanning 526–853 is the UvrD-like helicase C-terminal domain; the sequence is EEALKVGASY…RIMSIHKSKG (328 aa).

Belongs to the helicase family. AddA subfamily. In terms of assembly, heterodimer of AddA and AddB/RexB. Mg(2+) is required as a cofactor.

It carries out the reaction Couples ATP hydrolysis with the unwinding of duplex DNA by translocating in the 3'-5' direction.. It catalyses the reaction ATP + H2O = ADP + phosphate + H(+). In terms of biological role, the heterodimer acts as both an ATP-dependent DNA helicase and an ATP-dependent, dual-direction single-stranded exonuclease. Recognizes the chi site generating a DNA molecule suitable for the initiation of homologous recombination. The AddA nuclease domain is required for chi fragment generation; this subunit has the helicase and 3' -&gt; 5' nuclease activities. The chain is ATP-dependent helicase/nuclease subunit A from Clostridium botulinum (strain ATCC 19397 / Type A).